Here is a 271-residue protein sequence, read N- to C-terminus: S-adenosylmethionine decarboxylase proenzyme (271 aa).

S121 acts as the Schiff-base intermediate with substrate; via pyruvic acid in catalysis. S121 carries the pyruvic acid (Ser); by autocatalysis modification. H126 (proton acceptor; for processing activity) is an active-site residue. Catalysis depends on C149, which acts as the Proton donor; for catalytic activity.

The protein belongs to the prokaryotic AdoMetDC family. Type 2 subfamily. Heterooctamer of four alpha and four beta chains arranged as a tetramer of alpha/beta heterodimers. Pyruvate serves as cofactor. Post-translationally, is synthesized initially as an inactive proenzyme. Formation of the active enzyme involves a self-maturation process in which the active site pyruvoyl group is generated from an internal serine residue via an autocatalytic post-translational modification. Two non-identical subunits are generated from the proenzyme in this reaction, and the pyruvate is formed at the N-terminus of the alpha chain, which is derived from the carboxyl end of the proenzyme. The post-translation cleavage follows an unusual pathway, termed non-hydrolytic serinolysis, in which the side chain hydroxyl group of the serine supplies its oxygen atom to form the C-terminus of the beta chain, while the remainder of the serine residue undergoes an oxidative deamination to produce ammonia and the pyruvoyl group blocking the N-terminus of the alpha chain.

The catalysed reaction is S-adenosyl-L-methionine + H(+) = S-adenosyl 3-(methylsulfanyl)propylamine + CO2. The protein operates within amine and polyamine biosynthesis; S-adenosylmethioninamine biosynthesis; S-adenosylmethioninamine from S-adenosyl-L-methionine: step 1/1. Its function is as follows. Catalyzes the decarboxylation of S-adenosylmethionine to S-adenosylmethioninamine (dcAdoMet), the propylamine donor required for the synthesis of the polyamines spermine and spermidine from the diamine putrescine. The sequence is that of S-adenosylmethionine decarboxylase proenzyme from Clostridium perfringens (strain ATCC 13124 / DSM 756 / JCM 1290 / NCIMB 6125 / NCTC 8237 / Type A).